A 109-amino-acid chain; its full sequence is Guanylate cyclase activator 2B (109 aa).

The N-terminal stretch at 1 to 23 (MKVLALPVAVAAMLLVLAQNTQS) is a signal peptide. A propeptide spanning residues 24-94 (VYIQYEGFQV…NIFRALRSIS (71 aa)) is cleaved from the precursor. Cystine bridges form between cysteine 65/cysteine 78, cysteine 98/cysteine 106, and cysteine 101/cysteine 109.

This sequence belongs to the guanylin family. In terms of tissue distribution, small and large intestine and atria and ventricles of heart. Both uroguanylin and prouroguanylin are found in plasma.

It localises to the secreted. Functionally, endogenous activator of intestinal guanylate cyclase. It stimulates this enzyme through the same receptor binding region as the heat-stable enterotoxins. May be a potent physiological regulator of intestinal fluid and electrolyte transport. May be an autocrine/paracrine regulator of intestinal salt and water transport. The polypeptide is Guanylate cyclase activator 2B (GUCA2B) (Didelphis virginiana (North American opossum)).